The chain runs to 161 residues: Large ribosomal subunit protein uL10 (161 aa).

The protein belongs to the universal ribosomal protein uL10 family. Part of the ribosomal stalk of the 50S ribosomal subunit. The N-terminus interacts with L11 and the large rRNA to form the base of the stalk. The C-terminus forms an elongated spine to which L12 dimers bind in a sequential fashion forming a multimeric L10(L12)X complex.

Its function is as follows. Forms part of the ribosomal stalk, playing a central role in the interaction of the ribosome with GTP-bound translation factors. The polypeptide is Large ribosomal subunit protein uL10 (Buchnera aphidicola subsp. Cinara cedri (strain Cc)).